Reading from the N-terminus, the 165-residue chain is Thiol peroxidase (165 aa).

Residues 17–165 enclose the Thioredoxin domain; that stretch reads PQVGEIVENF…NYEAALAVLA (149 aa). The active-site Cysteine sulfenic acid (-SOH) intermediate is the Cys59. Cys59 and Cys93 are oxidised to a cystine.

The protein belongs to the peroxiredoxin family. Tpx subfamily. Homodimer.

The catalysed reaction is a hydroperoxide + [thioredoxin]-dithiol = an alcohol + [thioredoxin]-disulfide + H2O. In terms of biological role, thiol-specific peroxidase that catalyzes the reduction of hydrogen peroxide and organic hydroperoxides to water and alcohols, respectively. Plays a role in cell protection against oxidative stress by detoxifying peroxides. The polypeptide is Thiol peroxidase (Haemophilus influenzae (strain ATCC 51907 / DSM 11121 / KW20 / Rd)).